The primary structure comprises 99 residues: Thylakoid membrane protein ssl2009 (99 aa).

Residues 10–30 (GFLLGTVIGGVVGGILGSVLA) traverse the membrane as a helical segment. The stretch at 50 to 84 (NLDSEENIELARRRLEDKIAQLNLVIDDVRDQLGH) forms a coiled coil.

The protein localises to the cellular thylakoid membrane. In Synechocystis sp. (strain ATCC 27184 / PCC 6803 / Kazusa), this protein is Thylakoid membrane protein ssl2009.